The chain runs to 416 residues: Thyroid hormone receptor alpha (416 aa).

Over residues 1–13 (MEPMSNKQDSNSS) the composition is skewed to polar residues. Positions 1–37 (MEPMSNKQDSNSSEGDEKGWPDVPKRKRKNSQCSMKS) are disordered. A modulating region spans residues 1–58 (MEPMSNKQDSNSSEGDEKGWPDVPKRKRKNSQCSMKSMSALSVSVPGYIPSYLEKDEP). Basic and acidic residues predominate over residues 15–24 (GDEKGWPDVP). Positions 59, 62, 76, 79, 97, 103, 113, and 116 each coordinate Zn(2+). 2 NR C4-type zinc fingers span residues 59–79 (CVVC…CEGC) and 97–121 (CKYE…FKKC). A DNA-binding region (nuclear receptor) is located at residues 59–133 (CVVCGDKATG…VGMAMDLVLD (75 aa)). The NR LBD domain maps to 169–413 (AEWELIRMAT…PPLFLEVFED (245 aa)). Arg-234 is a 3,3',5-triiodo-L-thyronine binding site.

It belongs to the nuclear hormone receptor family. NR1 subfamily.

It localises to the nucleus. Nuclear hormone receptor that can act as a repressor or activator of transcription. High affinity receptor for thyroid hormones, including triiodothyronine and thyroxine. The sequence is that of Thyroid hormone receptor alpha (thra) from Hippoglossus hippoglossus (Atlantic halibut).